Here is a 517-residue protein sequence, read N- to C-terminus: GMP synthase [glutamine-hydrolyzing] (517 aa).

The 192-residue stretch at 11–202 folds into the Glutamine amidotransferase type-1 domain; the sequence is KIIALDFGSQ…AFDVCGAKAN (192 aa). Residue C88 is the Nucleophile of the active site. Catalysis depends on residues H176 and E178. The region spanning 203–392 is the GMPS ATP-PPase domain; that stretch reads WTMDDFIDMQ…LGIPHELVWR (190 aa). 230–236 contributes to the ATP binding site; sequence SGGVDSS.

In terms of assembly, homodimer.

It carries out the reaction XMP + L-glutamine + ATP + H2O = GMP + L-glutamate + AMP + diphosphate + 2 H(+). Its pathway is purine metabolism; GMP biosynthesis; GMP from XMP (L-Gln route): step 1/1. Its function is as follows. Catalyzes the synthesis of GMP from XMP. The polypeptide is GMP synthase [glutamine-hydrolyzing] (Limosilactobacillus reuteri (strain DSM 20016) (Lactobacillus reuteri)).